An 843-amino-acid polypeptide reads, in one-letter code: Protein P (843 aa).

The interval 1 to 177 is terminal protein domain (TP); that stretch reads MPLSYQHFRK…FCGSPYSWEQ (177 aa). The tract at residues 178-346 is spacer; the sequence is DLQHGRLVFQ…YCLSHIVNLI (169 aa). Disordered regions lie at residues 219 to 249 and 290 to 316; these read RKSRLGPQPTQGQLAGRPQGGSGSIRARIHP and STSKGHSSSGHAVELHHFPPNSSRSQS. Residues 290–299 show a composition bias toward polar residues; it reads STSKGHSSSG. A polymerase/reverse transcriptase domain (RT) region spans residues 347-690; sequence EDWGPCAEHG…YMTLYPVARQ (344 aa). A Reverse transcriptase domain is found at 357 to 600; that stretch reads EHRIRTPRTP…YSLNFMGYVI (244 aa). The Mg(2+) site is built by Asp429, Asp551, and Asp552.

Belongs to the hepadnaviridae P protein family.

It carries out the reaction DNA(n) + a 2'-deoxyribonucleoside 5'-triphosphate = DNA(n+1) + diphosphate. It catalyses the reaction Endonucleolytic cleavage to 5'-phosphomonoester.. Activated by host HSP70 and HSP40 in vitro to be able to bind the epsilon loop of the pgRNA. Because deletion of the RNase H region renders the protein partly chaperone-independent, the chaperones may be needed indirectly to relieve occlusion of the RNA-binding site by this domain. Inhibited by several reverse-transcriptase inhibitors: Lamivudine, Adefovir and Entecavir. In terms of biological role, multifunctional enzyme that converts the viral RNA genome into dsDNA in viral cytoplasmic capsids. This enzyme displays a DNA polymerase activity that can copy either DNA or RNA templates, and a ribonuclease H (RNase H) activity that cleaves the RNA strand of RNA-DNA heteroduplexes in a partially processive 3'- to 5'-endonucleasic mode. Neo-synthesized pregenomic RNA (pgRNA) are encapsidated together with the P protein, and reverse-transcribed inside the nucleocapsid. Initiation of reverse-transcription occurs first by binding the epsilon loop on the pgRNA genome, and is initiated by protein priming, thereby the 5'-end of (-)DNA is covalently linked to P protein. Partial (+)DNA is synthesized from the (-)DNA template and generates the relaxed circular DNA (RC-DNA) genome. After budding and infection, the RC-DNA migrates in the nucleus, and is converted into a plasmid-like covalently closed circular DNA (cccDNA). The activity of P protein does not seem to be necessary for cccDNA generation, and is presumably released from (+)DNA by host nuclear DNA repair machinery. This Homo sapiens (Human) protein is Protein P.